Here is a 304-residue protein sequence, read N- to C-terminus: Phosphoribosylaminoimidazole-succinocarboxamide synthase (304 aa).

The protein belongs to the SAICAR synthetase family.

The catalysed reaction is 5-amino-1-(5-phospho-D-ribosyl)imidazole-4-carboxylate + L-aspartate + ATP = (2S)-2-[5-amino-1-(5-phospho-beta-D-ribosyl)imidazole-4-carboxamido]succinate + ADP + phosphate + 2 H(+). The protein operates within purine metabolism; IMP biosynthesis via de novo pathway; 5-amino-1-(5-phospho-D-ribosyl)imidazole-4-carboxamide from 5-amino-1-(5-phospho-D-ribosyl)imidazole-4-carboxylate: step 1/2. This Streptomyces griseus subsp. griseus (strain JCM 4626 / CBS 651.72 / NBRC 13350 / KCC S-0626 / ISP 5235) protein is Phosphoribosylaminoimidazole-succinocarboxamide synthase.